The following is a 283-amino-acid chain: 4-diphosphocytidyl-2-C-methyl-D-erythritol kinase (283 aa).

Lys-10 is a catalytic residue. 99-109 (PMGGGLGGGSS) provides a ligand contact to ATP. Asp-141 is a catalytic residue.

The protein belongs to the GHMP kinase family. IspE subfamily. As to quaternary structure, homodimer.

It carries out the reaction 4-CDP-2-C-methyl-D-erythritol + ATP = 4-CDP-2-C-methyl-D-erythritol 2-phosphate + ADP + H(+). It functions in the pathway isoprenoid biosynthesis; isopentenyl diphosphate biosynthesis via DXP pathway; isopentenyl diphosphate from 1-deoxy-D-xylulose 5-phosphate: step 3/6. Its function is as follows. Catalyzes the phosphorylation of the position 2 hydroxy group of 4-diphosphocytidyl-2C-methyl-D-erythritol. The protein is 4-diphosphocytidyl-2-C-methyl-D-erythritol kinase of Escherichia coli O127:H6 (strain E2348/69 / EPEC).